The sequence spans 338 residues: MISTMIPSRGLIEAAFPGFAVSALVAATAQFLSDHYGAPAMLLALLLGLALNFLAEDGTRTAPGVAFTARTVLRLGVALLGARISAGMLAALGPGAIALVAAGVVLTILFALAASRLVGRGWRFALLTGGSVAICGASAAMAIAAVLPRHEKSERDLVFTVLSVTVLSTVAMVLYPMLAGFFGFTARDSGVFLGGTIHDVAQVVGAGFSIGPEAGETATLVKLIRVSMLAPVVLCFSLAIRARGLADSRGGKAPPLLPGFVIGFLVLAALNSLGLVPAAVSELAGQLSRWALLIAIAAVGIKTSLKKMFEVGTGAIALILAETVFLAVFVTIGLHVLG.

Transmembrane regions (helical) follow at residues 12-31 (IEAA…TAQF), 36-55 (YGAP…NFLA), 75-92 (LGVA…LAAL), 96-118 (AIAL…SRLV), 125-147 (ALLT…AAVL), 162-184 (LSVT…FFGF), 191-213 (VFLG…IGPE), 223-245 (LIRV…ARGL), 258-280 (PGFV…PAAV), and 315-337 (AIAL…LHVL).

The protein belongs to the UPF0324 family.

Its subcellular location is the cell membrane. The sequence is that of UPF0324 membrane protein TauZ (tauZ) from Paracoccus denitrificans.